The primary structure comprises 195 residues: Nucleoside-triphosphatase THEP1 (195 aa).

ATP is bound by residues 11 to 18 and 103 to 110; these read GRPGSGKS and VVVIDEIG.

This sequence belongs to the THEP1 NTPase family.

It catalyses the reaction a ribonucleoside 5'-triphosphate + H2O = a ribonucleoside 5'-diphosphate + phosphate + H(+). Functionally, has nucleotide phosphatase activity towards ATP, GTP, CTP, TTP and UTP. May hydrolyze nucleoside diphosphates with lower efficiency. The sequence is that of Nucleoside-triphosphatase THEP1 from Korarchaeum cryptofilum (strain OPF8).